The primary structure comprises 623 residues: Leucine-rich repeat, immunoglobulin-like domain and transmembrane domain-containing protein 1 (623 aa).

A signal peptide spans 1–21 (MRVALGMLWLLALAWPPQARG). The LRRNT domain maps to 22 to 59 (FCPSQCSCSLHIMGDGSKARTVVCNDPDMTLPPASIPP). At 22–526 (FCPSQCSCSL…EVVDAENTQQ (505 aa)) the chain is on the lumenal side. LRR repeat units lie at residues 60–81 (DTSR…AFRP), 84–105 (RLEQ…MLRG), 108–129 (RLRE…ALRD), 132–153 (KLRL…AARF), and 156–177 (NLTF…LIVS). N-linked (GlcNAc...) asparagine glycosylation is present at asparagine 156. An LRRCT domain is found at 201-253 (NPWACDCRLYDLVHLLDGWAPNLAFIETELRCASPRSLAGVAFSQLELRKCQG). An Ig-like C2-type domain is found at 266–335 (LLGGTALLRC…YICQAKNFLG (70 aa)). An intrachain disulfide couples cysteine 275 to cysteine 328. N-linked (GlcNAc...) asparagine glycans are attached at residues asparagine 296 and asparagine 455. The 89-residue stretch at 430–518 (MVRSVKVVGD…QCVIFSTNEV (89 aa)) folds into the Fibronectin type-III domain. The helical transmembrane segment at 527-547 (LINVVVISVAIVIALPLTLLV) threads the bilayer. The Cytoplasmic segment spans residues 548-623 (CCSALQKRCR…GGRRINEYFC (76 aa)). An LRR 6 repeat occupies 571 to 594 (YVNLERLGYSEDGLEELSRHSVSE).

As to quaternary structure, may form a homodimer. Interacts with LRIT2; may form a heterodimer with LRIT2. Interacts (via its N-terminal extracellular domain) with metabotropic glutamate receptor GRM6. Interacts (via its extreme C-terminus) with the scaffold protein FRMPD2 (via the third PDZ domain); the interaction leads to their colocalization in photoreceptor synapses.

The protein resides in the endoplasmic reticulum membrane. Its subcellular location is the cell projection. It is found in the dendrite. In terms of biological role, photoreceptor synaptic protein essential for normal vision. Involved in synapse formation in cone photoreceptor cells. The chain is Leucine-rich repeat, immunoglobulin-like domain and transmembrane domain-containing protein 1 (LRIT1) from Homo sapiens (Human).